The following is a 977-amino-acid chain: MMNNQSMVRYQDGSYDFGSSPSPPVYSPIYRSPPPPPQPMYGTLPQYPRFLDNSHHQVMDNSDHEQQQQHHHHQQQQQQQQHHHQQQQQQQHHQQQQQQHHQQQQQHHHQQQQQQQQQLDKSYAPSNIVSELQRKIQFLEEEISRKRDTIEGLQSQVAKYEQEKQSEKKKQSRYWTPEEHSRFIEALSKYGHKDVKSISQYVSTRNPTQVRTHAQKYFLRIDRERGRKLESKESINGGADKDDDWLREEYNDEGSPTQYSSCSNSPTTNSVANPFSNSLIISSNNNNNSNSSNNNNNNNNNNNNNNNNNNININGSSGSNSNVNSGNSSPLIKRKREAVTITATQAKSALLYKDAVLAILPTSWTPSDYEQFSKGLISNIDQDDIHSLCKLIKENFLPMQSMENIESAYHAFQKAVLKQKDINNNNNNNNNNNNINNNNNNNINNNNSNNNNNNNNTNNNNNNNNNNNNTNNNNNNNNNNNNNSSNINNNNMNNSINNNNINNNGPNSPNLLSSQPQQINQQIIQQQLLNNNNNQNSNQNNNNNNNNNNNNIINNNNNNNNNSSNNNSNNNNNINNNNNSNNNNNGNNNSNNNNNNNNNNNNNNNNINNNNNNNNGNNINNNNNNNNNSSNQIIQQQQQVQQQQMQQQQMMMQNQIIPTLPMPSPQSQVLQSQFQPQQQMQQQMQMQYQQQQQQQQQQQQQQQQQQQQQQQQQQQQQQQQQQQQQQQQQQQQIYQQNLNSNSGNSSPNISSINGDFVRSPNYNNKKRPPPVNVSRPEFPVTPLSGSPSHSPAQSPHYNLNNGNNNNGNGSSNSSSYSGNQSPLGLVPSPSLSLHPPSPLITSPTSHSIRWPGPLNNTLMYDYRRMEPSHGINYVPLQQSPHAPPQQSPHFNNNSNNNNNNSNNNSNNSNNNSSGSSGINISDLNNSSDENNNSSNNSSNGSGSWHQYQATDSPTGWGMNQTITAFSNTSLSINNSQS.

A disordered region spans residues 1–122 (MMNNQSMVRY…QQQQQQLDKS (122 aa)). A compositionally biased stretch (pro residues) spans 21–39 (PSPPVYSPIYRSPPPPPQP). Over residues 52-68 (DNSHHQVMDNSDHEQQQ) the composition is skewed to basic and acidic residues. The segment covering 75 to 118 (QQQQQQQHHHQQQQQQQHHQQQQQQHHQQQQQHHHQQQQQQQQQ) has biased composition (low complexity). Positions 167–222 (EKKKQSRYWTPEEHSRFIEALSKYGHKDVKSISQYVSTRNPTQVRTHAQKYFLRID) constitute an HTH myb-type domain. The H-T-H motif DNA-binding region spans 195 to 218 (VKSISQYVSTRNPTQVRTHAQKYF). Disordered regions lie at residues 229–331 (LESK…SSPL), 422–516 (INNN…SSQP), 531–650 (NNNN…QQQM), 738–853 (LNSN…WPGP), and 872–960 (NYVP…GMNQ). Over residues 241 to 252 (KDDDWLREEYND) the composition is skewed to acidic residues. The segment covering 254 to 275 (GSPTQYSSCSNSPTTNSVANPF) has biased composition (polar residues). Low complexity-rich tracts occupy residues 276-329 (SNSL…GNSS) and 422-504 (INNN…INNN). The span at 505–516 (GPNSPNLLSSQP) shows a compositional bias: polar residues. A compositionally biased stretch (low complexity) spans 738 to 754 (LNSNSGNSSPNISSING). The span at 783 to 797 (LSGSPSHSPAQSPHY) shows a compositional bias: polar residues. Low complexity-rich tracts occupy residues 798 to 848 (NLNN…SHSI) and 887 to 943 (SPHF…GSGS). Over residues 944–960 (WHQYQATDSPTGWGMNQ) the composition is skewed to polar residues.

It is found in the nucleus. In Dictyostelium discoideum (Social amoeba), this protein is Myb-like protein I (mybI).